A 530-amino-acid chain; its full sequence is Chaperonin GroEL 2 (530 aa).

ATP-binding positions include T30–P33, K51, D87–T91, G415, N479–A481, and D495.

Belongs to the chaperonin (HSP60) family. Forms a cylinder of 14 subunits composed of two heptameric rings stacked back-to-back. Interacts with the co-chaperonin GroES.

The protein resides in the cytoplasm. It carries out the reaction ATP + H2O + a folded polypeptide = ADP + phosphate + an unfolded polypeptide.. Together with its co-chaperonin GroES, plays an essential role in assisting protein folding. The GroEL-GroES system forms a nano-cage that allows encapsulation of the non-native substrate proteins and provides a physical environment optimized to promote and accelerate protein folding. The protein is Chaperonin GroEL 2 of Vibrio cholerae serotype O1 (strain ATCC 39315 / El Tor Inaba N16961).